Reading from the N-terminus, the 210-residue chain is dTTP/UTP pyrophosphatase (210 aa).

The active-site Proton acceptor is Asp89.

It belongs to the Maf family. YhdE subfamily. The cofactor is a divalent metal cation.

Its subcellular location is the cytoplasm. The catalysed reaction is dTTP + H2O = dTMP + diphosphate + H(+). The enzyme catalyses UTP + H2O = UMP + diphosphate + H(+). Nucleoside triphosphate pyrophosphatase that hydrolyzes dTTP and UTP. May have a dual role in cell division arrest and in preventing the incorporation of modified nucleotides into cellular nucleic acids. The protein is dTTP/UTP pyrophosphatase of Burkholderia thailandensis (strain ATCC 700388 / DSM 13276 / CCUG 48851 / CIP 106301 / E264).